Here is a 240-residue protein sequence, read N- to C-terminus: Orotidine 5'-phosphate decarboxylase (240 aa).

Substrate is bound by residues aspartate 19, lysine 41, 68 to 77 (DYKYYDIEET), threonine 123, arginine 184, glutamine 193, glycine 213, and arginine 214. The active-site Proton donor is lysine 70.

It belongs to the OMP decarboxylase family. Type 1 subfamily. Homodimer.

It carries out the reaction orotidine 5'-phosphate + H(+) = UMP + CO2. It participates in pyrimidine metabolism; UMP biosynthesis via de novo pathway; UMP from orotate: step 2/2. Catalyzes the decarboxylation of orotidine 5'-monophosphate (OMP) to uridine 5'-monophosphate (UMP). The chain is Orotidine 5'-phosphate decarboxylase from Nitrobacter winogradskyi (strain ATCC 25391 / DSM 10237 / CIP 104748 / NCIMB 11846 / Nb-255).